The chain runs to 347 residues: UDP-rhamnose/UDP-galactose transporter 1 (347 aa).

Transmembrane regions (helical) follow at residues 11-31 (AVSD…IIMA), 43-63 (FGFA…VGMV), 80-100 (LLWF…SLML), 103-123 (VGFY…LEWI), 132-152 (EVKA…VTDV), 159-179 (FICA…IGSL), 195-215 (APIQ…LLSG), 223-243 (MTYG…FCNI), 256-276 (SFQV…WLLF), and 285-305 (IAGM…VDIE).

Belongs to the TPT transporter family. TPT (TC 2.A.7.9) subfamily. Widely expressed in the whole plant.

It localises to the golgi apparatus membrane. Functionally, nucleotide-sugar transporter that transports UDP-rhamnose or UDP-galactose and UMP in a strict counter-exchange mode. The polypeptide is UDP-rhamnose/UDP-galactose transporter 1 (Arabidopsis thaliana (Mouse-ear cress)).